Reading from the N-terminus, the 336-residue chain is Holliday junction branch migration complex subunit RuvB (336 aa).

Positions 4–185 (MDERLLSGES…FGVLSRLEYY (182 aa)) are large ATPase domain (RuvB-L). ATP contacts are provided by residues leucine 24, arginine 25, glycine 66, lysine 69, threonine 70, threonine 71, 132-134 (EDF), arginine 175, tyrosine 185, and arginine 222. Threonine 70 is a binding site for Mg(2+). A small ATPAse domain (RuvB-S) region spans residues 186–256 (TVDQLSAIVE…ITQMALELLQ (71 aa)). The head domain (RuvB-H) stretch occupies residues 259–336 (KLGLDHIDHK…EHFGMEMPKV (78 aa)). Residues arginine 314 and arginine 319 each contribute to the DNA site.

Belongs to the RuvB family. As to quaternary structure, homohexamer. Forms an RuvA(8)-RuvB(12)-Holliday junction (HJ) complex. HJ DNA is sandwiched between 2 RuvA tetramers; dsDNA enters through RuvA and exits via RuvB. An RuvB hexamer assembles on each DNA strand where it exits the tetramer. Each RuvB hexamer is contacted by two RuvA subunits (via domain III) on 2 adjacent RuvB subunits; this complex drives branch migration. In the full resolvosome a probable DNA-RuvA(4)-RuvB(12)-RuvC(2) complex forms which resolves the HJ.

The protein resides in the cytoplasm. It carries out the reaction ATP + H2O = ADP + phosphate + H(+). The RuvA-RuvB-RuvC complex processes Holliday junction (HJ) DNA during genetic recombination and DNA repair, while the RuvA-RuvB complex plays an important role in the rescue of blocked DNA replication forks via replication fork reversal (RFR). RuvA specifically binds to HJ cruciform DNA, conferring on it an open structure. The RuvB hexamer acts as an ATP-dependent pump, pulling dsDNA into and through the RuvAB complex. RuvB forms 2 homohexamers on either side of HJ DNA bound by 1 or 2 RuvA tetramers; 4 subunits per hexamer contact DNA at a time. Coordinated motions by a converter formed by DNA-disengaged RuvB subunits stimulates ATP hydrolysis and nucleotide exchange. Immobilization of the converter enables RuvB to convert the ATP-contained energy into a lever motion, pulling 2 nucleotides of DNA out of the RuvA tetramer per ATP hydrolyzed, thus driving DNA branch migration. The RuvB motors rotate together with the DNA substrate, which together with the progressing nucleotide cycle form the mechanistic basis for DNA recombination by continuous HJ branch migration. Branch migration allows RuvC to scan DNA until it finds its consensus sequence, where it cleaves and resolves cruciform DNA. This is Holliday junction branch migration complex subunit RuvB from Bacillus cereus (strain ZK / E33L).